The chain runs to 171 residues: uncharacterized protein (171 aa).

This is an uncharacterized protein from Escherichia coli O157:H7.